The sequence spans 537 residues: Tyrosine-protein kinase Fyn (537 aa).

Residue G2 is the site of N-myristoyl glycine attachment. S-palmitoyl cysteine attachment occurs at residues C3 and C6. Position 12 is a phosphothreonine; by PKC (T12). The interval 14–35 (LTEERDGSLNQSSGYRYGTDPT) is disordered. 2 positions are modified to phosphoserine: S21 and S26. The region spanning 82–143 (TGVTLFVALY…PSNYVAPVDS (62 aa)) is the SH3 domain. The SH2 domain occupies 149 to 246 (WYFGKLGRKD…GLCCRLVVPC (98 aa)). At Y185 the chain carries Phosphotyrosine. The 254-residue stretch at 271–524 (LQLIKRLGNG…YLQSFLEDYF (254 aa)) folds into the Protein kinase domain. ATP-binding positions include 277 to 285 (LGNGQFGEV) and K299. D390 serves as the catalytic Proton acceptor. A Phosphotyrosine; by autocatalysis modification is found at Y420. The residue at position 531 (Y531) is a Phosphotyrosine; by CSK.

This sequence belongs to the protein kinase superfamily. Tyr protein kinase family. SRC subfamily. Interacts (via its SH3 domain) with PIK3R1 and PRMT8. Interacts with FYB1, PAG1, and SH2D1A. Interacts with CD79A (tyrosine-phosphorylated form); the interaction increases FYN activity. Interacts (via SH2 domain) with CSF1R (tyrosine phosphorylated). Interacts with TOM1L1 (phosphorylated form). Interacts with KDR (tyrosine phosphorylated). Interacts (via SH3 domain) with KLHL2 (via N-terminus). Interacts with SH2D1A and SLAMF1. Interacts with ITCH; the interaction phosphorylates ITCH and negatively regulates its activity. Interacts with FASLG. Interacts with RUNX3. Interacts with KIT. Interacts with EPHA8; possible downstream effector of EPHA8 in regulation of cell adhesion. Interacts with PTK2/FAK1; this interaction leads to PTK2/FAK1 phosphorylation and activation. Interacts with CAV1; this interaction couples integrins to the Ras-ERK pathway. Interacts with UNC119. Interacts (via SH2 domain) with PTPRH (phosphorylated form). Interacts with PTPRO (phosphorylated form). Interacts with PTPRB (phosphorylated form). Interacts with FYB2. Interacts with DSCAM. Interacts with SKAP1 and FYB1; this interaction promotes the phosphorylation of CLNK. Interacts with NEDD9; in the presence of PTK2. In terms of assembly, (Microbial infection) Interacts (via its SH3 domain) with hepatitis E virus/HEV protein ORF3. Mn(2+) is required as a cofactor. In terms of processing, autophosphorylated at Tyr-420. Phosphorylation on the C-terminal tail at Tyr-531 by CSK maintains the enzyme in an inactive state. PTPRC/CD45 dephosphorylates Tyr-531 leading to activation. Ultraviolet B (UVB) strongly increase phosphorylation at Thr-12 and kinase activity, and promotes translocation from the cytoplasm to the nucleus. Dephosphorylation at Tyr-420 by PTPN2 negatively regulates T-cell receptor signaling. Phosphorylated at tyrosine residues, which can be enhanced by NTN1. Palmitoylated. Palmitoylation at Cys-3 and Cys-6, probably by ZDHHC21, regulates subcellular location. In terms of tissue distribution, isoform 1 is highly expressed in the brain. Isoform 2 is expressed in cells of hemopoietic lineages, especially T-lymphocytes.

Its subcellular location is the cytoplasm. It localises to the nucleus. The protein localises to the cell membrane. The protein resides in the perikaryon. The enzyme catalyses L-tyrosyl-[protein] + ATP = O-phospho-L-tyrosyl-[protein] + ADP + H(+). Its activity is regulated as follows. Inhibited by phosphorylation of Tyr-531 by leukocyte common antigen and activated by dephosphorylation of this site. In terms of biological role, non-receptor tyrosine-protein kinase that plays a role in many biological processes including regulation of cell growth and survival, cell adhesion, integrin-mediated signaling, cytoskeletal remodeling, cell motility, immune response and axon guidance. Inactive FYN is phosphorylated on its C-terminal tail within the catalytic domain. Following activation by PKA, the protein subsequently associates with PTK2/FAK1, allowing PTK2/FAK1 phosphorylation, activation and targeting to focal adhesions. Involved in the regulation of cell adhesion and motility through phosphorylation of CTNNB1 (beta-catenin) and CTNND1 (delta-catenin). Regulates cytoskeletal remodeling by phosphorylating several proteins including the actin regulator WAS and the microtubule-associated proteins MAP2 and MAPT. Promotes cell survival by phosphorylating AGAP2/PIKE-A and preventing its apoptotic cleavage. Participates in signal transduction pathways that regulate the integrity of the glomerular slit diaphragm (an essential part of the glomerular filter of the kidney) by phosphorylating several slit diaphragm components including NPHS1, KIRREL1 and TRPC6. Plays a role in neural processes by phosphorylating DPYSL2, a multifunctional adapter protein within the central nervous system, ARHGAP32, a regulator for Rho family GTPases implicated in various neural functions, and SNCA, a small pre-synaptic protein. Involved in reelin signaling by mediating phosphorylation of DAB1 following reelin (RELN)-binding to its receptor. Participates in the downstream signaling pathways that lead to T-cell differentiation and proliferation following T-cell receptor (TCR) stimulation. Phosphorylates PTK2B/PYK2 in response to T-cell receptor activation. Also participates in negative feedback regulation of TCR signaling through phosphorylation of PAG1, thereby promoting interaction between PAG1 and CSK and recruitment of CSK to lipid rafts. CSK maintains LCK and FYN in an inactive form. Promotes CD28-induced phosphorylation of VAV1. In mast cells, phosphorylates CLNK after activation of immunoglobulin epsilon receptor signaling. Can also promote CD244-mediated NK cell activation. The protein is Tyrosine-protein kinase Fyn (FYN) of Homo sapiens (Human).